A 549-amino-acid polypeptide reads, in one-letter code: Probable protein kinase UbiB (549 aa).

The Protein kinase domain maps to 123 to 504 (DFDETALASA…QRNNTGFSRL (382 aa)). ATP contacts are provided by residues 129 to 137 (LASASIAQV) and Lys-156. Asp-291 functions as the Proton acceptor in the catalytic mechanism. A helical transmembrane segment spans residues 505–525 (MILGIAIAGTFWKFEMLPLWV).

Belongs to the ABC1 family. UbiB subfamily.

The protein localises to the cell inner membrane. It functions in the pathway cofactor biosynthesis; ubiquinone biosynthesis [regulation]. Its function is as follows. Is probably a protein kinase regulator of UbiI activity which is involved in aerobic coenzyme Q (ubiquinone) biosynthesis. The chain is Probable protein kinase UbiB from Glaesserella parasuis serovar 5 (strain SH0165) (Haemophilus parasuis).